The primary structure comprises 421 residues: Testin (421 aa).

Positions 92–199 (MILTNPVAAK…GDVKLPREMD (108 aa)) constitute a PET domain. Residues 133 to 164 (EKQPVAGSEGAQYRKKQLAKQLPAHDQDPSKC) form a disordered region. Basic and acidic residues predominate over residues 155–164 (PAHDQDPSKC). LIM zinc-binding domains follow at residues 234–297 (YSCY…CDSE), 299–359 (PRCA…NHAV), and 362–421 (QGCH…KMMS).

This sequence belongs to the prickle / espinas / testin family. In terms of assembly, interacts via LIM domain 1 with ZYX. Interacts (via LIM domain 3) with ENAH and VASP. Interacts with ALKBH4, talin, actin, alpha-actinin, GRIP1 and PXN. Interacts (via LIM domain 2) with ACTL7A (via N-terminus). Heterodimer with ACTL7A; the heterodimer interacts with ENAH to form a heterotrimer.

It localises to the cytoplasm. The protein resides in the cell junction. Its subcellular location is the focal adhesion. In terms of biological role, scaffold protein that may play a role in cell adhesion, cell spreading and in the reorganization of the actin cytoskeleton. Plays a role in the regulation of cell proliferation. May act as a tumor suppressor. The protein is Testin (TES) of Equus caballus (Horse).